We begin with the raw amino-acid sequence, 245 residues long: Flavin-dependent thymidylate synthase (245 aa).

The 206-residue stretch at 5-210 folds into the ThyX domain; the sequence is IRVKLVNYTK…ELRPIIKWAK (206 aa). FAD is bound by residues serine 59, 83 to 85, and glutamine 91; that span reads RHR. Residues 80–83, 91–95, and arginine 149 each bind dUMP; these read QLVR and QQSQR. Residues 83 to 93 carry the ThyX motif motif; sequence RHRLASYTQQS. Residues 165 to 167 and histidine 171 contribute to the FAD site; that span reads NLR. Arginine 176 contacts dUMP. Arginine 176 (involved in ionization of N3 of dUMP, leading to its activation) is an active-site residue.

This sequence belongs to the thymidylate synthase ThyX family. As to quaternary structure, homotetramer. The cofactor is FAD.

It carries out the reaction dUMP + (6R)-5,10-methylene-5,6,7,8-tetrahydrofolate + NADPH + H(+) = dTMP + (6S)-5,6,7,8-tetrahydrofolate + NADP(+). The protein operates within pyrimidine metabolism; dTTP biosynthesis. In terms of biological role, catalyzes the reductive methylation of 2'-deoxyuridine-5'-monophosphate (dUMP) to 2'-deoxythymidine-5'-monophosphate (dTMP) while utilizing 5,10-methylenetetrahydrofolate (mTHF) as the methyl donor, and NADPH and FADH(2) as the reductant. The sequence is that of Flavin-dependent thymidylate synthase from Thermococcus kodakarensis (strain ATCC BAA-918 / JCM 12380 / KOD1) (Pyrococcus kodakaraensis (strain KOD1)).